Consider the following 605-residue polypeptide: Exo-beta-1,3-glucanase (605 aa).

The segment at 1 to 23 (MHVPPTDPARSAPPASPHRRRRP) is disordered. A signal peptide spans 1–44 (MHVPPTDPARSAPPASPHRRRRPKALGLTALAAAMLMAVPTTQA). Substrate-binding positions include Q174, 194–196 (YGW), Q217, 446–449 (WRAD), and 480–481 (EH). E502 serves as the catalytic Proton donor. Y505 serves as a coordination point for substrate.

The protein belongs to the glycosyl hydrolase 55 family.

The protein localises to the secreted. The catalysed reaction is Successive hydrolysis of beta-D-glucose units from the non-reducing ends of (1-&gt;3)-beta-D-glucans, releasing alpha-glucose.. In terms of biological role, exo-beta-1,3-glucanase that specifically hydrolyzes laminarin and laminarioligosaccharides, producing glucose and laminaribiose as end products. This is Exo-beta-1,3-glucanase from Streptomyces sp. (strain SirexAA-E / ActE).